The sequence spans 82 residues: UPF0154 protein SMU_1719c (82 aa).

Residues 4–24 (FLWILLVIIALLAGLVGGTFI) traverse the membrane as a helical segment.

It belongs to the UPF0154 family.

The protein resides in the membrane. This Streptococcus mutans serotype c (strain ATCC 700610 / UA159) protein is UPF0154 protein SMU_1719c.